Here is an 89-residue protein sequence, read N- to C-terminus: Small ribosomal subunit protein uS15 (89 aa).

This sequence belongs to the universal ribosomal protein uS15 family. As to quaternary structure, part of the 30S ribosomal subunit. Forms a bridge to the 50S subunit in the 70S ribosome, contacting the 23S rRNA.

Its function is as follows. One of the primary rRNA binding proteins, it binds directly to 16S rRNA where it helps nucleate assembly of the platform of the 30S subunit by binding and bridging several RNA helices of the 16S rRNA. Forms an intersubunit bridge (bridge B4) with the 23S rRNA of the 50S subunit in the ribosome. The polypeptide is Small ribosomal subunit protein uS15 (Acidiphilium cryptum (strain JF-5)).